A 234-amino-acid polypeptide reads, in one-letter code: Large ribosomal subunit protein uL1 (234 aa).

Belongs to the universal ribosomal protein uL1 family. In terms of assembly, part of the 50S ribosomal subunit.

Binds directly to 23S rRNA. The L1 stalk is quite mobile in the ribosome, and is involved in E site tRNA release. Functionally, protein L1 is also a translational repressor protein, it controls the translation of the L11 operon by binding to its mRNA. The chain is Large ribosomal subunit protein uL1 from Aliivibrio salmonicida (strain LFI1238) (Vibrio salmonicida (strain LFI1238)).